The primary structure comprises 398 residues: Acetate kinase (398 aa).

Residue Asn10 participates in Mg(2+) binding. Residue Lys17 coordinates ATP. Substrate is bound at residue Arg89. The Proton donor/acceptor role is filled by Asp148. ATP contacts are provided by residues 208 to 212 (HLGNG), 283 to 285 (DCR), and 331 to 335 (GIGEN). A Mg(2+)-binding site is contributed by Glu385.

Belongs to the acetokinase family. As to quaternary structure, homodimer. Mg(2+) serves as cofactor. Requires Mn(2+) as cofactor.

The protein resides in the cytoplasm. It catalyses the reaction acetate + ATP = acetyl phosphate + ADP. It functions in the pathway metabolic intermediate biosynthesis; acetyl-CoA biosynthesis; acetyl-CoA from acetate: step 1/2. Functionally, catalyzes the formation of acetyl phosphate from acetate and ATP. Can also catalyze the reverse reaction. The sequence is that of Acetate kinase from Histophilus somni (strain 129Pt) (Haemophilus somnus).